The following is a 35-amino-acid chain: MDTRLLVVLLPVATAAAWALFNIGRLALQQLKRMS.

Residues 1–4 (MDTR) lie on the Lumenal side of the membrane. A helical membrane pass occupies residues 5-23 (LLVVLLPVATAAAWALFNI). Over 24–35 (GRLALQQLKRMS) the chain is Stromal.

Belongs to the PsbY family. PSII is composed of 1 copy each of membrane proteins PsbA, PsbB, PsbC, PsbD, PsbE, PsbF, PsbH, PsbI, PsbJ, PsbK, PsbL, PsbM, PsbT, PsbX, PsbY, PsbZ, Psb30/Ycf12, at least 3 peripheral proteins of the oxygen-evolving complex and a large number of cofactors. It forms dimeric complexes.

Its subcellular location is the plastid. The protein localises to the chloroplast thylakoid membrane. Functionally, loosely associated component of the core of photosystem II (PSII), it is not always seen in crystals. PSII is a light-driven water plastoquinone oxidoreductase, using light energy to abstract electrons from H(2)O, generating a proton gradient subsequently used for ATP formation. This Emiliania huxleyi (Coccolithophore) protein is Photosystem II reaction center protein Y.